Here is a 324-residue protein sequence, read N- to C-terminus: PTS system glucose-specific EIICBA component (324 aa).

Residues 1–63 form the PTS EIIC type-1 domain; that stretch reads HLLNVKIGMT…KWDLATPGRE (63 aa). The next 2 helical transmembrane spans lie at 5–25 and 28–48; these read VKIG…GVLP and TAWW…YFGF. The region spanning 78–159 is the PTS EIIB type-1 domain; that stretch reads GDLPYEVLAA…QDIMQGKAPA (82 aa). Catalysis depends on Cys-100, which acts as the Phosphocysteine intermediate; for EIIB activity. The tract at residues 156–177 is disordered; sequence KAPARAEEKPKTAASEAAESET. Residues 167 to 177 are compositionally biased toward low complexity; it reads TAASEAAESET. Positions 194–298 constitute a PTS EIIA type-1 domain; sequence DQVFSQKMMG…SIVTPVIFTN (105 aa). His-246 acts as the Tele-phosphohistidine intermediate; for EIIA activity in catalysis.

Its subcellular location is the cell membrane. It carries out the reaction N(pros)-phospho-L-histidyl-[protein] + D-glucose(out) = D-glucose 6-phosphate(in) + L-histidyl-[protein]. Functionally, the phosphoenolpyruvate-dependent sugar phosphotransferase system (sugar PTS), a major carbohydrate active transport system, catalyzes the phosphorylation of incoming sugar substrates concomitantly with their translocation across the cell membrane. This system is involved in glucose transport. The polypeptide is PTS system glucose-specific EIICBA component (ptsG) (Geobacillus stearothermophilus (Bacillus stearothermophilus)).